A 231-amino-acid chain; its full sequence is NADH-ubiquinone oxidoreductase chain 4 (231 aa).

6 helical membrane passes run 1–21 (PIAGSMVLAAILLKLGGYGII), 34–54 (MFIPFIVLALWGAILANLTCL), 63–85 (IAYSSISHMGLVVATIIIQTPWG), 89–111 (AMALMIAHGFTSSALFCLANTTY), 128–148 (ILPMTTTWWLLANLMNIAMPP), and 169–189 (TIIMLGLSMLITASYSLHMFL).

This sequence belongs to the complex I subunit 4 family.

Its subcellular location is the mitochondrion membrane. It carries out the reaction a ubiquinone + NADH + 5 H(+)(in) = a ubiquinol + NAD(+) + 4 H(+)(out). Core subunit of the mitochondrial membrane respiratory chain NADH dehydrogenase (Complex I) that is believed to belong to the minimal assembly required for catalysis. Complex I functions in the transfer of electrons from NADH to the respiratory chain. The immediate electron acceptor for the enzyme is believed to be ubiquinone. In Lachesis muta muta (Bushmaster), this protein is NADH-ubiquinone oxidoreductase chain 4 (MT-ND4).